A 360-amino-acid polypeptide reads, in one-letter code: Methionine import ATP-binding protein MetN (360 aa).

Positions 1 to 22 (MSHTASTPTPEEYSAQQPSTQG) are disordered. The ABC transporter domain occupies 25 to 265 (VEFRGITKVF…PQTQVAQKFV (241 aa)). Residue 62–69 (GYSGAGKS) coordinates ATP.

It belongs to the ABC transporter superfamily. Methionine importer (TC 3.A.1.24) family. In terms of assembly, the complex is composed of two ATP-binding proteins (MetN), two transmembrane proteins (MetI) and a solute-binding protein (MetQ).

The protein resides in the cell membrane. It carries out the reaction L-methionine(out) + ATP + H2O = L-methionine(in) + ADP + phosphate + H(+). It catalyses the reaction D-methionine(out) + ATP + H2O = D-methionine(in) + ADP + phosphate + H(+). Its function is as follows. Part of the ABC transporter complex MetNIQ involved in methionine import. Responsible for energy coupling to the transport system. The polypeptide is Methionine import ATP-binding protein MetN (Corynebacterium glutamicum (strain ATCC 13032 / DSM 20300 / JCM 1318 / BCRC 11384 / CCUG 27702 / LMG 3730 / NBRC 12168 / NCIMB 10025 / NRRL B-2784 / 534)).